The chain runs to 426 residues: Cuticle-degrading serine protease (426 aa).

The first 21 residues, 1 to 21 (MLTNGLISLLAIAGLATNAFA), serve as a signal peptide directing secretion. Positions 22–123 (GPIRKVSNAG…VEQDTVVTTY (102 aa)) are excised as a propeptide. The Inhibitor I9 domain maps to 39-122 (KYIVVLKKGL…YVEQDTVVTT (84 aa)). The Peptidase S8 domain maps to 130–426 (TWGLDRISHE…TNHQVTIVAS (297 aa)). Residue Asp-164 is the Charge relay system of the active site. A glycan (N-linked (GlcNAc...) asparagine) is linked at Asn-178. Residue His-200 is the Charge relay system of the active site. N-linked (GlcNAc...) asparagine glycosylation is present at Asn-252. Ser-353 serves as the catalytic Charge relay system.

The protein belongs to the peptidase S8 family.

The protein resides in the secreted. Its activity is regulated as follows. Inhibited by PMSF, SSI, the peptide Phe-Val and by Phe, but not by EDTA. In terms of biological role, hydrolyzes gelatin, casein, the chromogenic substrate azocoll and the cuticle of the nematode P.redivivus. Immobilizes P.redivivus. In Orbilia oligospora (Nematode-trapping fungus), this protein is Cuticle-degrading serine protease.